Here is a 498-residue protein sequence, read N- to C-terminus: ATP synthase subunit beta, chloroplastic (498 aa).

172–179 (GGAGVGKT) is a binding site for ATP.

The protein belongs to the ATPase alpha/beta chains family. In terms of assembly, F-type ATPases have 2 components, CF(1) - the catalytic core - and CF(0) - the membrane proton channel. CF(1) has five subunits: alpha(3), beta(3), gamma(1), delta(1), epsilon(1). CF(0) has four main subunits: a(1), b(1), b'(1) and c(9-12).

It localises to the plastid. It is found in the chloroplast thylakoid membrane. The enzyme catalyses ATP + H2O + 4 H(+)(in) = ADP + phosphate + 5 H(+)(out). Functionally, produces ATP from ADP in the presence of a proton gradient across the membrane. The catalytic sites are hosted primarily by the beta subunits. The sequence is that of ATP synthase subunit beta, chloroplastic from Agapanthus africanus (Lily of the Nile).